The sequence spans 285 residues: 2,4-didehydro-3-deoxy-L-rhamnonate hydrolase (285 aa).

Residue leucine 73 coordinates pyruvate. Positions 119, 121, and 150 each coordinate Mg(2+). Lysine 168 and threonine 238 together coordinate pyruvate.

This sequence belongs to the FAH family. In terms of assembly, homodimer. Requires Mg(2+) as cofactor.

The enzyme catalyses 2,4-didehydro-3-deoxy-L-rhamnonate + H2O = (S)-lactate + pyruvate + H(+). Its pathway is carbohydrate degradation; L-rhamnose degradation. Its function is as follows. Hydrolase that catalyzes the hydrolysis of 2,4-didehydro-3-deoxy-L-rhamnonate to pyruvate and L-lactate. Can also hydrolyze L-2,4-diketo-3-deoxylyxonate and L-2,4-diketo-3-deoxymannonate. In vitro can also use acylpyruvates such as acetylpyruvate and trimethylacetopyruvate. Catalyzes the fifth (last) step in an alternative pathway for rhamnose utilization that does not involve phosphorylated intermediates. This is 2,4-didehydro-3-deoxy-L-rhamnonate hydrolase from Sphingomonas sp. (strain SKA58).